A 189-amino-acid chain; its full sequence is dCTP deaminase, dUMP-forming (189 aa).

Residues 101-106 (KSSLGR), Asp-119, 127-129 (TLE), Gln-148, Tyr-162, and Gln-174 contribute to the dCTP site. Glu-129 acts as the Proton donor/acceptor in catalysis.

This sequence belongs to the dCTP deaminase family. Homotrimer.

The catalysed reaction is dCTP + 2 H2O = dUMP + NH4(+) + diphosphate. It functions in the pathway pyrimidine metabolism; dUMP biosynthesis; dUMP from dCTP: step 1/1. Functionally, bifunctional enzyme that catalyzes both the deamination of dCTP to dUTP and the hydrolysis of dUTP to dUMP without releasing the toxic dUTP intermediate. In Rhodococcus opacus (strain B4), this protein is dCTP deaminase, dUMP-forming.